The primary structure comprises 671 residues: DNA ligase (671 aa).

NAD(+) contacts are provided by residues 34-38 (DAEYD), 83-84 (SL), and glutamate 115. Lysine 117 acts as the N6-AMP-lysine intermediate in catalysis. NAD(+) contacts are provided by arginine 138, glutamate 174, lysine 291, and lysine 315. Zn(2+)-binding residues include cysteine 409, cysteine 412, cysteine 427, and cysteine 432. The BRCT domain maps to 589 to 671 (RSGGPLTGKS…LQMIDTLEEA (83 aa)).

The protein belongs to the NAD-dependent DNA ligase family. LigA subfamily. The cofactor is Mg(2+). Mn(2+) serves as cofactor.

It catalyses the reaction NAD(+) + (deoxyribonucleotide)n-3'-hydroxyl + 5'-phospho-(deoxyribonucleotide)m = (deoxyribonucleotide)n+m + AMP + beta-nicotinamide D-nucleotide.. DNA ligase that catalyzes the formation of phosphodiester linkages between 5'-phosphoryl and 3'-hydroxyl groups in double-stranded DNA using NAD as a coenzyme and as the energy source for the reaction. It is essential for DNA replication and repair of damaged DNA. In Syntrophotalea carbinolica (strain DSM 2380 / NBRC 103641 / GraBd1) (Pelobacter carbinolicus), this protein is DNA ligase.